The chain runs to 644 residues: Phosphatidylinositol polyphosphate 5-phosphatase type IV (644 aa).

The interval 1 to 193 is disordered; the sequence is MPSKAENLRP…RLPSLLPPRP (193 aa). A run of 8 repeats spans residues 10-13, 15-18, 28-31, 39-42, 55-58, 69-71, 72-74, and 75-78. Residues 10–242 are 13 X 4 AA repeats of P-X-X-P; that stretch reads PSEPAPQPPE…SLGPGRPRSP (233 aa). Residues 78 to 90 are compositionally biased toward basic and acidic residues; the sequence is PRLERALSLDDKG. A Phosphoserine modification is found at Ser-99. Over residues 107–118 the composition is skewed to polar residues; that stretch reads NGTSPSRGSVQS. Repeat 9 spans residues 121–124; it reads PGAP. A compositionally biased stretch (low complexity) spans 152–163; that stretch reads GSPSSGGNPLSG. 4 repeat units span residues 169 to 172, 183 to 185, 190 to 193, and 236 to 239. Phosphoserine is present on residues Ser-241 and Ser-256. A Cysteine methyl ester modification is found at Cys-641. A lipid anchor (S-farnesyl cysteine) is attached at Cys-641. Residues 642 to 644 constitute a propeptide, removed in mature form; the sequence is SVS.

Belongs to the inositol 1,4,5-trisphosphate 5-phosphatase type IV family. As to quaternary structure, interacts (when prenylated) with PDE6D; this is important for normal location in cilia. Detected in brain, heart, pancreas, testis and spleen.

It is found in the cytoplasm. The protein resides in the cytoskeleton. It localises to the cilium axoneme. The protein localises to the golgi apparatus. Its subcellular location is the golgi stack membrane. It is found in the cell membrane. The protein resides in the cell projection. It localises to the ruffle. The protein localises to the nucleus. The enzyme catalyses a 1,2-diacyl-sn-glycero-3-phospho-(1D-myo-inositol-4,5-bisphosphate) + H2O = a 1,2-diacyl-sn-glycero-3-phospho-(1D-myo-inositol 4-phosphate) + phosphate. It carries out the reaction a 1,2-diacyl-sn-glycero-3-phospho-(1D-myo-inositol-3,4,5-trisphosphate) + H2O = a 1,2-diacyl-sn-glycero-3-phospho-(1D-myo-inositol-3,4-bisphosphate) + phosphate. It catalyses the reaction a 1,2-diacyl-sn-glycero-3-phospho-(1D-myo-inositol-3,5-bisphosphate) + H2O = a 1,2-diacyl-sn-glycero-3-phospho-(1D-myo-inositol-3-phosphate) + phosphate. With respect to regulation, active in the presence of octyl-glucoside or Triton X-100, but completely inhibited by CTAB. Its function is as follows. Phosphatidylinositol (PtdIns) phosphatase that specifically hydrolyzes the 5-phosphate of phosphatidylinositol-3,4,5-trisphosphate (PtdIns(3,4,5)P3), phosphatidylinositol 4,5-bisphosphate (PtdIns(4,5)P2) and phosphatidylinositol 3,5-bisphosphate (PtdIns(3,5)P2). Specific for lipid substrates, inactive towards water soluble inositol phosphates. Plays an essential role in the primary cilium by controlling ciliary growth and phosphoinositide 3-kinase (PI3K) signaling and stability. The chain is Phosphatidylinositol polyphosphate 5-phosphatase type IV (INPP5E) from Homo sapiens (Human).